The primary structure comprises 313 residues: Ribosomal RNA small subunit methyltransferase H (313 aa).

S-adenosyl-L-methionine contacts are provided by residues 31 to 33 (GGH), Asp51, Phe77, Asp95, and Gln102.

The protein belongs to the methyltransferase superfamily. RsmH family.

Its subcellular location is the cytoplasm. It carries out the reaction cytidine(1402) in 16S rRNA + S-adenosyl-L-methionine = N(4)-methylcytidine(1402) in 16S rRNA + S-adenosyl-L-homocysteine + H(+). Specifically methylates the N4 position of cytidine in position 1402 (C1402) of 16S rRNA. This chain is Ribosomal RNA small subunit methyltransferase H, found in Xylella fastidiosa (strain M12).